The chain runs to 564 residues: Proline--tRNA ligase (564 aa).

It belongs to the class-II aminoacyl-tRNA synthetase family. ProS type 1 subfamily. As to quaternary structure, homodimer.

Its subcellular location is the cytoplasm. It carries out the reaction tRNA(Pro) + L-proline + ATP = L-prolyl-tRNA(Pro) + AMP + diphosphate. Catalyzes the attachment of proline to tRNA(Pro) in a two-step reaction: proline is first activated by ATP to form Pro-AMP and then transferred to the acceptor end of tRNA(Pro). As ProRS can inadvertently accommodate and process non-cognate amino acids such as alanine and cysteine, to avoid such errors it has two additional distinct editing activities against alanine. One activity is designated as 'pretransfer' editing and involves the tRNA(Pro)-independent hydrolysis of activated Ala-AMP. The other activity is designated 'posttransfer' editing and involves deacylation of mischarged Ala-tRNA(Pro). The misacylated Cys-tRNA(Pro) is not edited by ProRS. The sequence is that of Proline--tRNA ligase from Xylella fastidiosa (strain Temecula1 / ATCC 700964).